Here is a 203-residue protein sequence, read N- to C-terminus: Enterotoxin-like toxin X (203 aa).

This sequence belongs to the staphylococcal/streptococcal toxin family.

The protein localises to the secreted. Its function is as follows. Plays a role in the inhibition of the host innate immune system. Inhibits phagocytosis and killing by human neutrophils by interacting with multiple neutrophil surface glycoproteins in a sialic acid-dependent manner. In Staphylococcus aureus (strain NCTC 8325 / PS 47), this protein is Enterotoxin-like toxin X.